A 552-amino-acid chain; its full sequence is MFS-type transporter atr4 (552 aa).

Residues 1–102 are disordered; the sequence is MEDPKSLSAP…NIVDWDGPND (102 aa). Positions 16 to 27 are enriched in low complexity; sequence ADTTTADETPAA. Composition is skewed to polar residues over residues 38 to 47 and 71 to 80; these read KAGSESSENT and LRNSSVSRSN. A glycan (N-linked (GlcNAc...) asparagine) is linked at Asn73. Transmembrane regions (helical) follow at residues 118-138, 153-173, 182-202, 214-234, 244-264, and 272-292; these read IFLV…LATG, LGSL…LVIA, MPLY…CALG, LQGC…SDLI, GIYA…GGFL, and WLMW…FVVM. Asn314 carries an N-linked (GlcNAc...) asparagine glycan. 6 helical membrane-spanning segments follow: residues 346–366, 385–405, 425–445, 452–472, 498–518, and 521–541; these read PIIF…YLLF, GLVY…FGVF, LLPM…YGWS, WIVP…TLVC, VVGA…GIGW, and SLLA…YVYG.

This sequence belongs to the major facilitator superfamily.

The protein localises to the cell membrane. Its function is as follows. MFS-type transporter; part of the gene cluster that mediates the biosynthesis of atranorin, a depside of polyketide origin that accumulates in the cortical or medullary layers of lichen thalli. This is MFS-type transporter atr4 from Stereocaulon alpinum (Alpine snow lichen).